A 260-amino-acid chain; its full sequence is UPF0294 protein plu0699 (260 aa).

This sequence belongs to the UPF0294 family.

The protein resides in the cytoplasm. The sequence is that of UPF0294 protein plu0699 from Photorhabdus laumondii subsp. laumondii (strain DSM 15139 / CIP 105565 / TT01) (Photorhabdus luminescens subsp. laumondii).